Here is a 682-residue protein sequence, read N- to C-terminus: T-box brain protein 1 (682 aa).

Disordered regions lie at residues 43–83 (TDNL…RSKL) and 108–127 (SQSS…FPYP). The span at 58-68 (GMTNQSDTDNF) shows a compositional bias: polar residues. Positions 108–122 (SQSSQPQSAATAPSA) are enriched in low complexity. The segment at residues 213–393 (LWLKFHRHQT…HNPFAKGFRD (181 aa)) is a DNA-binding region (T-box). At threonine 408 the chain carries Phosphothreonine. Serine 410 carries the phosphoserine modification. Disordered stretches follow at residues 447-483 (PGAG…SPQR) and 588-658 (GLAA…KSEV). The segment covering 462-472 (PHTNGLLSPQQ) has biased composition (polar residues). A Phosphoserine modification is found at serine 594. Residues 619–629 (SSIKSIDSSDS) show a composition bias toward low complexity. Position 641 is a phosphoserine (serine 641).

As to quaternary structure, homodimer. Part of a complex containing CASK, TBR1 and TSPYL2; may modulate gene expression in response to neuronal synaptic activity. Interacts with FOXP2. Interacts with FOXP1. Interacts with BCL11A. In terms of tissue distribution, brain.

The protein resides in the nucleus. In terms of biological role, transcriptional repressor involved in multiple aspects of cortical development, including neuronal migration, laminar and areal identity, and axonal projection. As transcriptional repressor of FEZF2, it blocks the formation of the corticospinal (CS) tract from layer 6 projection neurons, thereby restricting the origin of CS axons specifically to layer 5 neurons. The sequence is that of T-box brain protein 1 (TBR1) from Homo sapiens (Human).